The sequence spans 318 residues: Methionyl-tRNA formyltransferase (318 aa).

112-115 (SILP) contacts (6S)-5,6,7,8-tetrahydrofolate.

Belongs to the Fmt family.

The catalysed reaction is L-methionyl-tRNA(fMet) + (6R)-10-formyltetrahydrofolate = N-formyl-L-methionyl-tRNA(fMet) + (6S)-5,6,7,8-tetrahydrofolate + H(+). Functionally, attaches a formyl group to the free amino group of methionyl-tRNA(fMet). The formyl group appears to play a dual role in the initiator identity of N-formylmethionyl-tRNA by promoting its recognition by IF2 and preventing the misappropriation of this tRNA by the elongation apparatus. The polypeptide is Methionyl-tRNA formyltransferase (Shewanella oneidensis (strain ATCC 700550 / JCM 31522 / CIP 106686 / LMG 19005 / NCIMB 14063 / MR-1)).